Consider the following 1160-residue polypeptide: ATP-dependent RNA helicase dhx8 (1160 aa).

Disordered stretches follow at residues 75–140 (TTTT…SIPN) and 153–192 (PIDD…QNKR). 2 stretches are compositionally biased toward low complexity: residues 76–110 (TTTT…NNNN) and 122–132 (NSNSNNQKKNQ). Residues 155-192 (DDEKTKEELKRKQQDMDREFEREQREKRDRDREQQNKR) show a composition bias toward basic and acidic residues. An S1 motif domain is found at 202-274 (YKIYDGKVSS…ASSKISLSMK (73 aa)). Over residues 294–320 (ISTNSTNNRSNPFKPNNNNNNSSNNNN) the composition is skewed to low complexity. 2 disordered regions span residues 294-334 (ISTN…KNRK) and 409-438 (KPNG…QRNE). Polar residues predominate over residues 412-424 (GSLQRAASTQTAL). The segment covering 425–438 (SKERKEEKNQQRNE) has biased composition (basic and acidic residues). In terms of domain architecture, Helicase ATP-binding spans 518 to 681 (LQAVSEHQLL…FMNAQLFIIP (164 aa)). 531 to 538 (GETGSGKT) lines the ATP pocket. Positions 628–631 (DEAH) match the DEAH box motif. The Helicase C-terminal domain occupies 699-879 (YLDASLITVM…NTVLTMKAMG (181 aa)).

It belongs to the DEAD box helicase family. DEAH subfamily. DDX8/PRP22 sub-subfamily. In terms of assembly, identified in the spliceosome complex.

The protein localises to the nucleus. It carries out the reaction ATP + H2O = ADP + phosphate + H(+). Facilitates nuclear export of spliced mRNA by releasing the RNA from the spliceosome. This chain is ATP-dependent RNA helicase dhx8 (dhx8), found in Dictyostelium discoideum (Social amoeba).